Here is a 1893-residue protein sequence, read N- to C-terminus: Serine-aspartate repeat-containing protein I (1893 aa).

The signal sequence occupies residues 1–54 (MNFKGVKLLKNSKKRLDFLPNTLNKYSIRKFTVGTASILVGATLFLGVSNEAEA). A disordered region spans residues 53–333 (EAAEKIDSPT…AHGINNKNKQ (281 aa)). Basic and acidic residues predominate over residues 54–222 (AAEKIDSPTK…AEEPATKEEA (169 aa)). Tandem repeats lie at residues 72–83 (AATKEEAATTEE), 84–95 (PATKEEAATTEE), 96–107 (PATKEEAAIAEE), 108–119 (PATKEEAATTEE), 120–131 (PATKEEAAIAEE), 132–143 (PATKEEAATTEE), 144–155 (PATKEEAATTEE), 156–167 (PATKEEAAIAEE), 168–179 (PATKEEAATTEE), 180–191 (PATKEEAAIAEE), 192–203 (PATKEEAVTSEE), 204–215 (AATKEKAAIAEE), 216–227 (PATKEEAAIAEE), 228–239 (PETKEEAATTEE), 240–251 (PATKEEAAIAEE), 252–263 (AATKEKAVTSEE), 264–275 (AATKEKAAIAEE), 276–287 (AATKEKAAIAEE), 288–299 (PETKEEAATTEE), 300–311 (PETKEEAAIAEE), and 312–323 (PATKEKAVTSEE). Residues 72–323 (AATKEEAATT…TKEKAVTSEE (252 aa)) are 21 X 12 AA tandem repeat of [AP]-[AE]-T-K-E-[EK]-A-[AV]-[IT]-[AST]-E-E. A compositionally biased stretch (basic and acidic residues) spans 240 to 284 (PATKEEAAIAEEAATKEKAVTSEEAATKEKAAIAEEAATKEKAAI). Over residues 286-302 (EEPETKEEAATTEEPET) the composition is skewed to acidic residues. Basic and acidic residues predominate over residues 312 to 325 (PATKEKAVTSEEAH). Positions 324 to 755 (AHGINNKNKQ…GSSTAQGDNP (432 aa)) are ligand binding A region. CNA-B domains follow at residues 756 to 874 (TYNL…YETP) and 875 to 984 (KYSL…YFDE). The segment at 941-1867 (KPEGLTQTTT…GNNTQNNGTL (927 aa)) is disordered. Basic and acidic residues predominate over residues 955 to 975 (DENKDADGEEVHVTITDHDDF). The segment covering 981 to 1836 (YFDEDSDADA…DSDADADADS (856 aa)) has biased composition (acidic residues). Over residues 1837 to 1851 (DADKYHNDTADKSND) the composition is skewed to basic and acidic residues. Residues 1854-1858 (LPDTG) carry the LPXTG sorting signal motif. Position 1857 is a pentaglycyl murein peptidoglycan amidated threonine (Thr-1857). Residues 1858–1893 (GNNTQNNGTLFGSLFAALGGLFLVGSRRKNKNNEEK) constitute a propeptide, removed by sortase.

The protein belongs to the serine-aspartate repeat-containing protein (SDr) family.

The protein resides in the secreted. It localises to the cell wall. Functionally, responsible for collagen binding by S.saprophyticus. The polypeptide is Serine-aspartate repeat-containing protein I (sdrI) (Staphylococcus saprophyticus).